A 557-amino-acid chain; its full sequence is Dihydroxy-acid dehydratase (557 aa).

Residue C47 coordinates [2Fe-2S] cluster. D79 contacts Mg(2+). C120 is a binding site for [2Fe-2S] cluster. Mg(2+) contacts are provided by D121 and K122. K122 carries the post-translational modification N6-carboxylysine. C192 serves as a coordination point for [2Fe-2S] cluster. E444 contacts Mg(2+). S470 (proton acceptor) is an active-site residue.

Belongs to the IlvD/Edd family. In terms of assembly, homodimer. [2Fe-2S] cluster serves as cofactor. The cofactor is Mg(2+).

It carries out the reaction (2R)-2,3-dihydroxy-3-methylbutanoate = 3-methyl-2-oxobutanoate + H2O. The catalysed reaction is (2R,3R)-2,3-dihydroxy-3-methylpentanoate = (S)-3-methyl-2-oxopentanoate + H2O. The protein operates within amino-acid biosynthesis; L-isoleucine biosynthesis; L-isoleucine from 2-oxobutanoate: step 3/4. It functions in the pathway amino-acid biosynthesis; L-valine biosynthesis; L-valine from pyruvate: step 3/4. Functions in the biosynthesis of branched-chain amino acids. Catalyzes the dehydration of (2R,3R)-2,3-dihydroxy-3-methylpentanoate (2,3-dihydroxy-3-methylvalerate) into 2-oxo-3-methylpentanoate (2-oxo-3-methylvalerate) and of (2R)-2,3-dihydroxy-3-methylbutanoate (2,3-dihydroxyisovalerate) into 2-oxo-3-methylbutanoate (2-oxoisovalerate), the penultimate precursor to L-isoleucine and L-valine, respectively. The protein is Dihydroxy-acid dehydratase of Parasynechococcus marenigrum (strain WH8102).